The following is a 312-amino-acid chain: Malate dehydrogenase (312 aa).

Residues 7–13 (GAAGGIG) and Asp-34 each bind NAD(+). Residues Arg-81 and Arg-87 each contribute to the substrate site. Residues Asn-94 and 117–119 (ITN) each bind NAD(+). The substrate site is built by Asn-119 and Arg-153. Catalysis depends on His-177, which acts as the Proton acceptor. Met-227 is an NAD(+) binding site.

It belongs to the LDH/MDH superfamily. MDH type 1 family. Homodimer.

It catalyses the reaction (S)-malate + NAD(+) = oxaloacetate + NADH + H(+). Functionally, catalyzes the reversible oxidation of malate to oxaloacetate. This is Malate dehydrogenase from Salmonella choleraesuis (strain SC-B67).